The sequence spans 480 residues: Glutamate--tRNA ligase (480 aa).

The 'HIGH' region signature appears at 21–31 (PSPTGYLHVGG). The Zn(2+) site is built by cysteine 110, cysteine 112, cysteine 137, and histidine 139. The 'KMSKS' region signature appears at 248-252 (KLSKR). Lysine 251 contacts ATP.

This sequence belongs to the class-I aminoacyl-tRNA synthetase family. Glutamate--tRNA ligase type 1 subfamily. Monomer. Requires Zn(2+) as cofactor.

Its subcellular location is the cytoplasm. The catalysed reaction is tRNA(Glu) + L-glutamate + ATP = L-glutamyl-tRNA(Glu) + AMP + diphosphate. Functionally, catalyzes the attachment of glutamate to tRNA(Glu) in a two-step reaction: glutamate is first activated by ATP to form Glu-AMP and then transferred to the acceptor end of tRNA(Glu). The polypeptide is Glutamate--tRNA ligase (Haemophilus influenzae (strain 86-028NP)).